Reading from the N-terminus, the 501-residue chain is Ectoine/hydroxyectoine transporter (501 aa).

A run of 12 helical transmembrane segments spans residues 9–29 (PVFY…ATLP), 45–65 (IHFG…LITL), 86–106 (FFTW…VFWG), 137–157 (AFFH…LVIA), 190–210 (LAVI…ILQM), 220–240 (VPTS…TYLI), 258–278 (LGSL…VFIL), 311–331 (WTIF…AFIA), 343–363 (VLGV…AFGG), 395–415 (LPMT…FLVT), 441–461 (IVWG…GGLE), and 465–485 (TASL…MASF).

This sequence belongs to the BCCT transporter (TC 2.A.15) family.

The protein resides in the cell inner membrane. Functionally, mediates the import of ectoine and hydroxyectoine, which function as osmotic and cold stress protectants. Also has minor uptake activities for the compatible solutes proline and glycine betaine. The protein is Ectoine/hydroxyectoine transporter of Virgibacillus pantothenticus.